The following is a 305-amino-acid chain: Cysteine synthase (305 aa).

Lys-45 is modified (N6-(pyridoxal phosphate)lysine). Residues Asn-75, 179–183 (GSGGT), and Ser-266 each bind pyridoxal 5'-phosphate.

Belongs to the cysteine synthase/cystathionine beta-synthase family. Homodimer. Requires pyridoxal 5'-phosphate as cofactor.

It catalyses the reaction O-acetyl-L-serine + hydrogen sulfide = L-cysteine + acetate. Its pathway is amino-acid biosynthesis; L-cysteine biosynthesis; L-cysteine from L-serine: step 2/2. The sequence is that of Cysteine synthase (cysM) from Helicobacter pylori (strain J99 / ATCC 700824) (Campylobacter pylori J99).